A 506-amino-acid chain; its full sequence is Maturase K (506 aa).

The protein belongs to the intron maturase 2 family. MatK subfamily.

It localises to the plastid. It is found in the chloroplast. Its function is as follows. Usually encoded in the trnK tRNA gene intron. Probably assists in splicing its own and other chloroplast group II introns. This chain is Maturase K, found in Prunus persica (Peach).